Consider the following 105-residue polypeptide: Thioredoxin (105 aa).

In terms of domain architecture, Thioredoxin spans 2 to 105 (VKQIESKYAF…KLEATINELI (104 aa)). Lysine 3 bears the N6-acetyllysine mark. The residue at position 8 (lysine 8) is an N6-succinyllysine. Active-site nucleophile residues include cysteine 32 and cysteine 35. Residues cysteine 32 and cysteine 35 are joined by a disulfide bond. Residue lysine 39 is modified to N6-acetyllysine. An S-nitrosocysteine mark is found at cysteine 62 and cysteine 69. Position 73 is an S-nitrosocysteine; alternate (cysteine 73). Position 94 is an N6-acetyllysine; alternate (lysine 94). The residue at position 94 (lysine 94) is an N6-succinyllysine; alternate.

Belongs to the thioredoxin family. Homodimer; disulfide-linked. Interacts with TXNIP through the redox-active site. Interacts with MAP3K5 and CASP3. Interacts with APEX1; the interaction stimulates the FOS/JUN AP-1 DNA-binding activity in a redox-dependent manner. Post-translationally, in the fully reduced protein, both Cys-69 and Cys-73 are nitrosylated in response to nitric oxide (NO). When two disulfide bonds are present in the protein, only Cys-73 is nitrosylated. Cys-73 can serve as donor for nitrosylation of target proteins.

The protein localises to the nucleus. It is found in the cytoplasm. Its subcellular location is the secreted. In terms of biological role, participates in various redox reactions through the reversible oxidation of its active center dithiol to a disulfide and catalyzes dithiol-disulfide exchange reactions. Plays a role in the reversible S-nitrosylation of cysteine residues in target proteins, and thereby contributes to the response to intracellular nitric oxide. Nitrosylates the active site Cys of CASP3 in response to nitric oxide (NO), and thereby inhibits caspase-3 activity. Induces the FOS/JUN AP-1 DNA binding activity in ionizing radiation (IR) cells through its oxidation/reduction status and stimulates AP-1 transcriptional activity. This Ovis aries (Sheep) protein is Thioredoxin (TXN).